The chain runs to 75 residues: Salivary glue protein Sgs-8 (75 aa).

The first 24 residues, 1-24 (MKLLVVAVIACIMLIGFADPASGC), serve as a signal peptide directing secretion.

The chain is Salivary glue protein Sgs-8 (Sgs8) from Drosophila melanogaster (Fruit fly).